A 332-amino-acid polypeptide reads, in one-letter code: MRLLVLLWGCLLLPGYEALEGPEEISGFEGDTVSLQCTYREELRDHRKYWCRKGGILFSRCSGTIYAEEEGQETMKGRVSIRDSRQELSLIVTLWNLTLQDAGEYWCGVEKRGPDESLLISLFVFPGPCCPPSPSPTFQPLATTRLQPKAKAQQTQPPGLTSPGLYPAATTAKQGKTGAEAPPLPGTSQYGHERTSQYTGTSPHPATSPPAGSSRPPMQLDSTSAEDTSPALSSGSSKPRVSIPMVRILAPVLVLLSLLSAAGLIAFCSHLLLWRKEAQQATETQRNEKFCLSRLTAEEKEAPSQAPEGDVISMPPLHTSEEELGFSKFVSA.

Residues 1 to 18 (MRLLVLLWGCLLLPGYEA) form the signal peptide. One can recognise an Ig-like V-type domain in the interval 19–121 (LEGPEEISGF…RGPDESLLIS (103 aa)). Topologically, residues 19-247 (LEGPEEISGF…KPRVSIPMVR (229 aa)) are extracellular. A disulfide bridge connects residues C37 and C107. An N-linked (GlcNAc...) asparagine glycan is attached at N96. O-linked (GalNAc...) threonine glycosylation is found at T137, T143, T144, T155, T161, T170, T171, T177, T187, and T195. The tract at residues 146 to 239 (LQPKAKAQQT…PALSSGSSKP (94 aa)) is disordered. A compositionally biased stretch (low complexity) spans 147-158 (QPKAKAQQTQPP). A compositionally biased stretch (low complexity) spans 168–181 (AATTAKQGKTGAEA). Residues 186–205 (GTSQYGHERTSQYTGTSPHP) are compositionally biased toward polar residues. An O-linked (GalNAc...) serine glycan is attached at S196. Residues T199 and T201 are each glycosylated (O-linked (GalNAc...) threonine). The O-linked (GalNAc...) serine glycan is linked to S202. O-linked (GalNAc...) threonine glycosylation is present at T207. O-linked (GalNAc...) serine glycosylation is found at S208, S213, S214, and S222. Over residues 220-239 (LDSTSAEDTSPALSSGSSKP) the composition is skewed to polar residues. Residue T223 is glycosylated (O-linked (GalNAc...) threonine). An O-linked (GalNAc...) serine glycan is attached at S224. T228 is a glycosylation site (O-linked (GalNAc...) threonine). S229 and S237 each carry an O-linked (GalNAc...) serine glycan. Residues 248 to 268 (ILAPVLVLLSLLSAAGLIAFC) form a helical membrane-spanning segment. Topologically, residues 269 to 332 (SHLLLWRKEA…ELGFSKFVSA (64 aa)) are cytoplasmic.

The protein belongs to the CD300 family. In terms of processing, O-glycosylated with sialylated oligosaccharides. Highly expressed in heart, skeletal muscle and placenta.

It localises to the apical cell membrane. The protein resides in the basolateral cell membrane. It is found in the endosome. Its subcellular location is the multivesicular body membrane. In terms of biological role, receptor which may mediate L-selectin-dependent lymphocyte rollings. Binds SELL in a calcium dependent manner. Binds lymphocyte. The sequence is that of CMRF35-like molecule 9 (CD300LG) from Homo sapiens (Human).